The primary structure comprises 385 residues: Palmitoyl-[acyl-carrier-protein] 4-desaturase, chloroplastic (385 aa).

Residues 1–36 (MAMKLNALMTLQCPKRNMFTRIAPPQAGRVRSKVSM) constitute a chloroplast transit peptide. Positions 126, 164, 167, 217, 250, and 253 each coordinate Fe cation.

The protein belongs to the fatty acid desaturase type 2 family. Homodimer. Fe(2+) is required as a cofactor. Found only in tissues which synthesize petroselinic acid, such as developing seeds.

The protein resides in the plastid. The protein localises to the chloroplast. It carries out the reaction hexadecanoyl-[ACP] + 2 reduced [2Fe-2S]-[ferredoxin] + O2 + 2 H(+) = (4Z)-hexadecenoyl-[ACP] + 2 oxidized [2Fe-2S]-[ferredoxin] + 2 H2O. Converts palmitoyl-ACP to (4Z)-hexadec-4-enoyl-ACP by introduction of a cis double bond between carbons 4 and 5 of the acyl chain. This is Palmitoyl-[acyl-carrier-protein] 4-desaturase, chloroplastic from Coriandrum sativum (Coriander).